The sequence spans 337 residues: Cysteine proteinase 3 (337 aa).

The signal sequence occupies residues 1–21 (MRLSITLIFTLIVLSISFISA). Residues 22–120 (GNVFSHKQYQ…GLRLNRPQFK (99 aa)) constitute a propeptide, activation peptide. 3 disulfide bridges follow: Cys142/Cys185, Cys176/Cys219, and Cys277/Cys326. Cys145 is a catalytic residue. Active-site residues include His284 and Asn304.

The protein belongs to the peptidase C1 family.

The protein localises to the lysosome. The sequence is that of Cysteine proteinase 3 (cprC) from Dictyostelium discoideum (Social amoeba).